We begin with the raw amino-acid sequence, 991 residues long: Seizure protein 6 (991 aa).

The signal sequence occupies residues 1–19 (MRPAALLLLPSLLALLAHG). At 20–922 (LSSEAPITGE…AASSALDAAH (903 aa)) the chain is on the extracellular side. The interval 79 to 193 (EGLEREEAPQ…QEGPGDMDRP (115 aa)) is disordered. Positions 119–132 (TSPTPAVAAAPTQP) are enriched in low complexity. The span at 175 to 184 (PPSQAWTPTQ) shows a compositional bias: polar residues. Residues Cys-241 and Cys-268 are joined by a disulfide bond. One can recognise a CUB 1 domain in the interval 241 to 353 (CSWNFSGPEG…HFRYQAYLLS (113 aa)). Residue Asn-286 is glycosylated (N-linked (GlcNAc...) asparagine). The region spanning 352–411 (LSCHFPRRPAYGDVTVTSLHPGGSAHFHCATGYQLKGARFLTCLNATQPFWDSQEPVCIA) is the Sushi 1 domain. Cystine bridges form between Cys-354/Cys-394, Cys-380/Cys-409, Cys-413/Cys-440, Cys-529/Cys-571, Cys-556/Cys-586, Cys-590/Cys-616, Cys-707/Cys-749, Cys-735/Cys-762, Cys-768/Cys-810, Cys-796/Cys-827, Cys-835/Cys-877, and Cys-863/Cys-892. N-linked (GlcNAc...) asparagine glycans are attached at residues Asn-396, Asn-433, and Asn-538. In terms of domain architecture, CUB 2 spans 413-524 (CGGVIRNATT…AGMALRYEAF (112 aa)). In terms of domain architecture, Sushi 2 spans 527–588 (GHCYEPFVKY…WNETEPACRA (62 aa)). A CUB 3 domain is found at 590–701 (CSGEITDSAG…QGFVIHFFEV (112 aa)). 3 consecutive Sushi domains span residues 705–764 (DTCP…SCQR), 766–829 (TSCH…KCLL), and 833–894 (KPCH…ICRA). The helical transmembrane segment at 923-943 (LAAAIFLPLVAMVLLVGGVYL) threads the bilayer. Residues 944–991 (YFSRFQGKSPLQLPRTHPRPYNRITVESAFDNPTYETGSLSFAGDERI) are Cytoplasmic-facing.

Belongs to the SEZ6 family. In terms of processing, glycosylated. Brain-specific. Expressed in extrasynaptic and synaptic subcellular fractions (at protein level). Expression correlates with the most active periods of cortical neurogenesis and neuronal maturation. Expression is restricted to the gray matter with higher levels in the forebrain including the olfactory bulb, anterior olfactory nuclei, olfactory tubercle, striatum, hippocampal CA1 pyramidal cell layer and cerebral cortex. Expression is up-regulated with the convulsant drug, pentylenetetrazole.

It is found in the cell membrane. It localises to the cell projection. Its subcellular location is the dendrite. The protein localises to the synapse. The protein resides in the secreted. It is found in the cytoplasm. Functionally, may play a role in cell-cell recognition and in neuronal membrane signaling. Seems to be important for the achievement of the necessary balance between dendrite elongation and branching during the elaboration of a complex dendritic arbor. Involved in the development of appropriate excitatory synaptic connectivity. This is Seizure protein 6 (Sez6) from Mus musculus (Mouse).